The primary structure comprises 436 residues: Enolase (436 aa).

H159 and E168 together coordinate substrate. The active-site Proton donor is the E211. D246, E295, and D320 together coordinate Mg(2+). Positions 295 and 320 each coordinate substrate. K345 functions as the Proton acceptor in the catalytic mechanism. Residues S372–S375 and K396 each bind substrate.

It belongs to the enolase family. In terms of assembly, homodimer. It depends on Mg(2+) as a cofactor.

It is found in the cytoplasm. The enzyme catalyses (2R)-2-phosphoglycerate = phosphoenolpyruvate + H2O. The protein operates within carbohydrate degradation; glycolysis; pyruvate from D-glyceraldehyde 3-phosphate: step 4/5. This is Enolase from Cunninghamella elegans.